The sequence spans 95 residues: Acylphosphatase (95 aa).

The Acylphosphatase-like domain occupies 7 to 93; the sequence is TWQLFAHGRV…QLFDRFDWLP (87 aa). Residues arginine 22 and asparagine 40 contribute to the active site.

It belongs to the acylphosphatase family.

It carries out the reaction an acyl phosphate + H2O = a carboxylate + phosphate + H(+). The polypeptide is Acylphosphatase (acyP) (Cupriavidus metallidurans (strain ATCC 43123 / DSM 2839 / NBRC 102507 / CH34) (Ralstonia metallidurans)).